A 432-amino-acid chain; its full sequence is Serine hydroxymethyltransferase (432 aa).

(6S)-5,6,7,8-tetrahydrofolate-binding positions include leucine 131 and glycine 135–leucine 137. The residue at position 240 (lysine 240) is an N6-(pyridoxal phosphate)lysine.

This sequence belongs to the SHMT family. In terms of assembly, homodimer. It depends on pyridoxal 5'-phosphate as a cofactor.

The protein resides in the cytoplasm. It catalyses the reaction (6R)-5,10-methylene-5,6,7,8-tetrahydrofolate + glycine + H2O = (6S)-5,6,7,8-tetrahydrofolate + L-serine. It functions in the pathway one-carbon metabolism; tetrahydrofolate interconversion. Its pathway is amino-acid biosynthesis; glycine biosynthesis; glycine from L-serine: step 1/1. Its function is as follows. Catalyzes the reversible interconversion of serine and glycine with tetrahydrofolate (THF) serving as the one-carbon carrier. This reaction serves as the major source of one-carbon groups required for the biosynthesis of purines, thymidylate, methionine, and other important biomolecules. Also exhibits THF-independent aldolase activity toward beta-hydroxyamino acids, producing glycine and aldehydes, via a retro-aldol mechanism. The sequence is that of Serine hydroxymethyltransferase from Bradyrhizobium diazoefficiens (strain JCM 10833 / BCRC 13528 / IAM 13628 / NBRC 14792 / USDA 110).